Here is a 785-residue protein sequence, read N- to C-terminus: E3 UFM1-protein ligase 1 homolog (785 aa).

Positions Ala405–Val483 are disordered.

This sequence belongs to the UFL1 family.

Functionally, E3 UFM1-protein ligase that mediates ufmylation of target proteins. This chain is E3 UFM1-protein ligase 1 homolog, found in Drosophila pseudoobscura pseudoobscura (Fruit fly).